We begin with the raw amino-acid sequence, 108 residues long: Cytochrome c6 (108 aa).

The signal sequence occupies residues methionine 1–alanine 23. The heme c site is built by cysteine 37, cysteine 40, histidine 41, and methionine 81.

Belongs to the cytochrome c family. PetJ subfamily. In terms of assembly, monomer. Binds 1 heme c group covalently per subunit.

The protein localises to the plastid. It localises to the chloroplast thylakoid lumen. In terms of biological role, functions as an electron carrier between membrane-bound cytochrome b6-f and photosystem I in oxygenic photosynthesis. The chain is Cytochrome c6 from Gracilaria tenuistipitata var. liui (Red alga).